We begin with the raw amino-acid sequence, 148 residues long: Probable glycine cleavage system H protein 2 (148 aa).

One can recognise a Lipoyl-binding domain in the interval V32–K114. The residue at position 73 (K73) is an N6-lipoyllysine.

It belongs to the GcvH family. In terms of assembly, the glycine cleavage system is composed of four proteins: P, T, L and H. It depends on (R)-lipoate as a cofactor.

Functionally, the glycine cleavage system catalyzes the degradation of glycine. The H protein shuttles the methylamine group of glycine from the P protein to the T protein. The chain is Probable glycine cleavage system H protein 2 from Sulfurisphaera tokodaii (strain DSM 16993 / JCM 10545 / NBRC 100140 / 7) (Sulfolobus tokodaii).